Reading from the N-terminus, the 84-residue chain is ATP synthase subunit c (84 aa).

2 consecutive transmembrane segments (helical) span residues 9-29 (IIAS…GFAI) and 54-74 (IVAG…LLFI).

This sequence belongs to the ATPase C chain family. F-type ATPases have 2 components, F(1) - the catalytic core - and F(0) - the membrane proton channel. F(1) has five subunits: alpha(3), beta(3), gamma(1), delta(1), epsilon(1). F(0) has three main subunits: a(1), b(2) and c(10-14). The alpha and beta chains form an alternating ring which encloses part of the gamma chain. F(1) is attached to F(0) by a central stalk formed by the gamma and epsilon chains, while a peripheral stalk is formed by the delta and b chains.

It localises to the cell inner membrane. Its function is as follows. F(1)F(0) ATP synthase produces ATP from ADP in the presence of a proton or sodium gradient. F-type ATPases consist of two structural domains, F(1) containing the extramembraneous catalytic core and F(0) containing the membrane proton channel, linked together by a central stalk and a peripheral stalk. During catalysis, ATP synthesis in the catalytic domain of F(1) is coupled via a rotary mechanism of the central stalk subunits to proton translocation. Functionally, key component of the F(0) channel; it plays a direct role in translocation across the membrane. A homomeric c-ring of between 10-14 subunits forms the central stalk rotor element with the F(1) delta and epsilon subunits. The protein is ATP synthase subunit c of Pasteurella multocida (strain Pm70).